A 321-amino-acid chain; its full sequence is MQKMVWAFIVASAVGLLIGPWLIPYLRRLKFGQSIREEGPKGHQRKAGTPTMGGLLFLIAVPMAVLVTVGFTPQSGVLLLGLLGFGLIGFLDDYIKVVKKRNLGLRAWQKFTGQLILSLILIYGVVYGIDRGTSLYLPGFEVWWDAGALYYPLALLLIVGTTNAVNLADGLDGLAAGMTFWVALAFAAIASAGTSDVTAAFAAALAGGCIGFLFFNHHPARMFMGDTGSLALGGAVATLALLTRTELILPVLGAVFVAETLSVILQVASFKLTGKRIFRMSPLHHHFELGGWPETTVVYTFWAASLISAFLGVLLAMPIRF.

10 helical membrane-spanning segments follow: residues 4-24 (MVWA…WLIP), 51-71 (TMGG…TVGF), 75-95 (SGVL…DDYI), 109-129 (QKFT…VYGI), 139-159 (GFEV…LLIV), 173-193 (GLAA…ASAG), 195-215 (SDVT…FLFF), 222-242 (MFMG…LALL), 247-267 (LILP…ILQV), and 297-317 (VVYT…LLAM).

This sequence belongs to the glycosyltransferase 4 family. MraY subfamily. It depends on Mg(2+) as a cofactor.

The protein localises to the cell membrane. It catalyses the reaction UDP-N-acetyl-alpha-D-muramoyl-L-alanyl-gamma-D-glutamyl-meso-2,6-diaminopimeloyl-D-alanyl-D-alanine + di-trans,octa-cis-undecaprenyl phosphate = di-trans,octa-cis-undecaprenyl diphospho-N-acetyl-alpha-D-muramoyl-L-alanyl-D-glutamyl-meso-2,6-diaminopimeloyl-D-alanyl-D-alanine + UMP. The protein operates within cell wall biogenesis; peptidoglycan biosynthesis. Its function is as follows. Catalyzes the initial step of the lipid cycle reactions in the biosynthesis of the cell wall peptidoglycan: transfers peptidoglycan precursor phospho-MurNAc-pentapeptide from UDP-MurNAc-pentapeptide onto the lipid carrier undecaprenyl phosphate, yielding undecaprenyl-pyrophosphoryl-MurNAc-pentapeptide, known as lipid I. The protein is Phospho-N-acetylmuramoyl-pentapeptide-transferase of Heliobacterium modesticaldum (strain ATCC 51547 / Ice1).